The following is a 103-amino-acid chain: Flagellar hook-basal body complex protein FliE (103 aa).

The protein belongs to the FliE family.

It is found in the bacterial flagellum basal body. The polypeptide is Flagellar hook-basal body complex protein FliE (Cronobacter sakazakii (strain ATCC BAA-894) (Enterobacter sakazakii)).